Here is a 234-residue protein sequence, read N- to C-terminus: Transcriptional regulatory protein WalR (234 aa).

Residues 3–116 (KILIVDDEKP…ELQARVKALL (114 aa)) enclose the Response regulatory domain. Asp52 carries the 4-aspartylphosphate modification. The ompR/PhoB-type DNA-binding region spans 133–232 (PQPIQIGDLE…RRGVGYYMRN (100 aa)).

Monomer. Homodimer. In terms of processing, phosphorylated by WalK; can also be dephosphorylated by WalK.

The protein localises to the cytoplasm. Member of the two-component regulatory system WalK/WalR that regulates genes involved in cell wall metabolism. Binds to the promoter region of the transcription factor fabT gene in the fabTH-acp operon in vitro. Inhibits transcription of fabT, probably acting in an unphosphorylated form, thereby playing a role in the regulation of fatty acid biosynthesis. Essential for normal growth in vitro. Required for maintaining normal cellular morphology, acting, at least in part, by regulating peptidoglycan hydrolase pcsB. Involved in maintaining expression of WalRK regulon genes in exponentially growing cells. The sequence is that of Transcriptional regulatory protein WalR from Streptococcus pneumoniae serotype 2 (strain D39 / NCTC 7466).